A 219-amino-acid chain; its full sequence is MKSFVVAPFIVAIDGPAASGKGTLARRIATHYGMPHLDTGLTYRAVAKALLDKGLSLDDEALATDAALSLDLLAMDKAVLSAHAIGEAASKVAVMPAVRRALVEAQRHFANALPSSVLDGRDIGTVVCPDAAIKLFVTASPEVRARRRFDEVLARGDTADFAEILADLKKRDERDMNRTDSPLRPAEDAHLLDTSEMSIEAAFLAAKKLIDHALAQHRG.

15–23 (GPAASGKGT) contacts ATP.

This sequence belongs to the cytidylate kinase family. Type 1 subfamily.

Its subcellular location is the cytoplasm. The enzyme catalyses CMP + ATP = CDP + ADP. The catalysed reaction is dCMP + ATP = dCDP + ADP. The protein is Cytidylate kinase of Brucella suis biovar 1 (strain 1330).